A 72-amino-acid chain; its full sequence is NAD(P)H-quinone oxidoreductase subunit O (72 aa).

This sequence belongs to the complex I NdhO subunit family. NDH-1 can be composed of about 15 different subunits; different subcomplexes with different compositions have been identified which probably have different functions.

The protein resides in the cellular thylakoid membrane. The catalysed reaction is a plastoquinone + NADH + (n+1) H(+)(in) = a plastoquinol + NAD(+) + n H(+)(out). It carries out the reaction a plastoquinone + NADPH + (n+1) H(+)(in) = a plastoquinol + NADP(+) + n H(+)(out). Functionally, NDH-1 shuttles electrons from an unknown electron donor, via FMN and iron-sulfur (Fe-S) centers, to quinones in the respiratory and/or the photosynthetic chain. The immediate electron acceptor for the enzyme in this species is believed to be plastoquinone. Couples the redox reaction to proton translocation, and thus conserves the redox energy in a proton gradient. Cyanobacterial NDH-1 also plays a role in inorganic carbon-concentration. The protein is NAD(P)H-quinone oxidoreductase subunit O of Rippkaea orientalis (strain PCC 8801 / RF-1) (Cyanothece sp. (strain PCC 8801)).